Reading from the N-terminus, the 396-residue chain is Putative glutamate--cysteine ligase 2-2 (396 aa).

The protein belongs to the glutamate--cysteine ligase type 2 family. YbdK subfamily.

It carries out the reaction L-cysteine + L-glutamate + ATP = gamma-L-glutamyl-L-cysteine + ADP + phosphate + H(+). Its function is as follows. ATP-dependent carboxylate-amine ligase which exhibits weak glutamate--cysteine ligase activity. The chain is Putative glutamate--cysteine ligase 2-2 from Mycolicibacterium smegmatis (strain ATCC 700084 / mc(2)155) (Mycobacterium smegmatis).